The following is a 556-amino-acid chain: F-box protein YDR131C (556 aa).

The F-box domain maps to 1-44 (MFDKLPYEIFKQIAWRIPQEDKISLTYVCKRSYESIIPFIYQNL).

In terms of assembly, interacts with SKP1. Component of the probable SCF(YDR131C) complex containing CDC53, SKP1, RBX1 and YDR131C.

Its subcellular location is the vacuole. Its pathway is protein modification; protein ubiquitination. Functionally, substrate recognition component of a SCF (SKP1-CUL1-F-box protein) E3 ubiquitin-protein ligase complex which mediates the ubiquitination and subsequent proteasomal degradation of target proteins. Probably recognizes and binds to phosphorylated target proteins. This is F-box protein YDR131C from Saccharomyces cerevisiae (strain ATCC 204508 / S288c) (Baker's yeast).